The following is a 264-amino-acid chain: Small ribosomal subunit protein eS1 (264 aa).

The residue at position 34 (Lys34) is an N6-acetyllysine; alternate. Residue Lys34 forms a Glycyl lysine isopeptide (Lys-Gly) (interchain with G-Cter in SUMO2); alternate linkage. Lys56 is modified (N6-acetyllysine). The residue at position 155 (Tyr155) is an ADP-ribosyltyrosine. Positions 233 to 264 (GEGSSSGKATGDETGAKVERADGYEPPVQESV) are disordered. A phosphoserine mark is found at Ser236 and Ser237. A compositionally biased stretch (basic and acidic residues) spans 242–255 (TGDETGAKVERADG). An N6-acetyllysine; alternate modification is found at Lys249. A Glycyl lysine isopeptide (Lys-Gly) (interchain with G-Cter in SUMO2); alternate cross-link involves residue Lys249. Tyr256 is subject to Phosphotyrosine. The residue at position 263 (Ser263) is a Phosphoserine.

Belongs to the eukaryotic ribosomal protein eS1 family. In terms of assembly, component of the small ribosomal subunit. Mature ribosomes consist of a small (40S) and a large (60S) subunit. The 40S subunit contains about 33 different proteins and 1 molecule of RNA (18S). The 60S subunit contains about 49 different proteins and 3 molecules of RNA (28S, 5.8S and 5S). Part of the small subunit (SSU) processome, composed of more than 70 proteins and the RNA chaperone small nucleolar RNA (snoRNA) U3. In terms of processing, ADP-ribosylated at Tyr-155 by PARP1 in presence of HPF1.

The protein resides in the cytoplasm. It is found in the nucleus. The protein localises to the nucleolus. Functionally, component of the small ribosomal subunit. The ribosome is a large ribonucleoprotein complex responsible for the synthesis of proteins in the cell. Part of the small subunit (SSU) processome, first precursor of the small eukaryotic ribosomal subunit. During the assembly of the SSU processome in the nucleolus, many ribosome biogenesis factors, an RNA chaperone and ribosomal proteins associate with the nascent pre-rRNA and work in concert to generate RNA folding, modifications, rearrangements and cleavage as well as targeted degradation of pre-ribosomal RNA by the RNA exosome. May play a role during erythropoiesis. This is Small ribosomal subunit protein eS1 from Callithrix jacchus (White-tufted-ear marmoset).